A 119-amino-acid polypeptide reads, in one-letter code: Ribosome-binding factor A (119 aa).

Belongs to the RbfA family. As to quaternary structure, monomer. Binds 30S ribosomal subunits, but not 50S ribosomal subunits or 70S ribosomes.

It is found in the cytoplasm. Functionally, one of several proteins that assist in the late maturation steps of the functional core of the 30S ribosomal subunit. Associates with free 30S ribosomal subunits (but not with 30S subunits that are part of 70S ribosomes or polysomes). Required for efficient processing of 16S rRNA. May interact with the 5'-terminal helix region of 16S rRNA. The chain is Ribosome-binding factor A from Chlorobium limicola (strain DSM 245 / NBRC 103803 / 6330).